The sequence spans 512 residues: Methionine--tRNA ligase (512 aa).

Residues 12–22 carry the 'HIGH' region motif; that stretch reads YYVNDVPHIGH. The short motif at 295–299 is the 'KMSKS' region element; the sequence is KISKS. Lys298 lines the ATP pocket.

This sequence belongs to the class-I aminoacyl-tRNA synthetase family. MetG type 2B subfamily. In terms of assembly, monomer.

The protein localises to the cytoplasm. It catalyses the reaction tRNA(Met) + L-methionine + ATP = L-methionyl-tRNA(Met) + AMP + diphosphate. In terms of biological role, is required not only for elongation of protein synthesis but also for the initiation of all mRNA translation through initiator tRNA(fMet) aminoacylation. This is Methionine--tRNA ligase from Rickettsia felis (strain ATCC VR-1525 / URRWXCal2) (Rickettsia azadi).